The sequence spans 453 residues: Citrate (Re)-synthase (453 aa).

In terms of domain architecture, Pyruvate carboxyltransferase spans 46–316 (IYITDTTFRD…TKNMKLHVIT (271 aa)).

Belongs to the alpha-IPM synthase/homocitrate synthase family. Mn(2+) serves as cofactor. Co(2+) is required as a cofactor. Requires Mg(2+) as cofactor.

It carries out the reaction oxaloacetate + acetyl-CoA + H2O = citrate + CoA + H(+). With respect to regulation, inhibited by p-chloromercuribenzoate (pCMB), EDTA, Zn(2+) ions, and under aerobic conditions. In terms of biological role, catalyzes the condensation of the acetyl group of acetyl-CoA with oxaloacetate to form citrate. This enzyme is highly Re-face stereospecific with respect to the C-2 of oxaloacetate. The sequence is that of Citrate (Re)-synthase from Clostridium kluyveri (strain ATCC 8527 / DSM 555 / NBRC 12016 / NCIMB 10680 / K1).